We begin with the raw amino-acid sequence, 122 residues long: Large ribosomal subunit protein uL14 (122 aa).

The protein belongs to the universal ribosomal protein uL14 family. As to quaternary structure, part of the 50S ribosomal subunit. Forms a cluster with proteins L3 and L19. In the 70S ribosome, L14 and L19 interact and together make contacts with the 16S rRNA in bridges B5 and B8.

Binds to 23S rRNA. Forms part of two intersubunit bridges in the 70S ribosome. This Burkholderia vietnamiensis (strain G4 / LMG 22486) (Burkholderia cepacia (strain R1808)) protein is Large ribosomal subunit protein uL14.